Here is a 403-residue protein sequence, read N- to C-terminus: Tryptophan synthase beta chain 1 (403 aa).

Lysine 96 is subject to N6-(pyridoxal phosphate)lysine.

This sequence belongs to the TrpB family. In terms of assembly, tetramer of two alpha and two beta chains. The cofactor is pyridoxal 5'-phosphate.

It catalyses the reaction (1S,2R)-1-C-(indol-3-yl)glycerol 3-phosphate + L-serine = D-glyceraldehyde 3-phosphate + L-tryptophan + H2O. It participates in amino-acid biosynthesis; L-tryptophan biosynthesis; L-tryptophan from chorismate: step 5/5. In terms of biological role, the beta subunit is responsible for the synthesis of L-tryptophan from indole and L-serine. This is Tryptophan synthase beta chain 1 (trpB1) from Wolinella succinogenes (strain ATCC 29543 / DSM 1740 / CCUG 13145 / JCM 31913 / LMG 7466 / NCTC 11488 / FDC 602W) (Vibrio succinogenes).